Here is a 94-residue protein sequence, read N- to C-terminus: Integration host factor subunit beta (94 aa).

It belongs to the bacterial histone-like protein family. In terms of assembly, heterodimer of an alpha and a beta chain.

This protein is one of the two subunits of integration host factor, a specific DNA-binding protein that functions in genetic recombination as well as in transcriptional and translational control. The sequence is that of Integration host factor subunit beta from Escherichia coli (strain UTI89 / UPEC).